Here is a 622-residue protein sequence, read N- to C-terminus: Signal recognition particle subunit SRP68 (622 aa).

The segment at 576-622 (RDATPKKAAKGSSAAAASSKTSNQEEEEQQGLTGMLSGWKKSFWGNK) is disordered. The span at 585–595 (KGSSAAAASSK) shows a compositional bias: low complexity.

Belongs to the SRP68 family. As to quaternary structure, heterodimer with srpa-72. Srpa-68/srpa-72 heterodimer formation is stabilized by the presence of 7SL RNA. Component of a signal recognition particle (SRP) complex that consists of a 7SL RNA molecule of 300 nucleotides and six protein subunits: srpa-72, srpa-68, SRP54, F37F2.2/SRP19, F25G6.8/SRP14 and ZK512.4/SRP9. Within the SRP complex, interacts (via C-terminus) with srpa-72 (via N-terminus).

It localises to the cytoplasm. The protein resides in the nucleus. The protein localises to the nucleolus. It is found in the endoplasmic reticulum. Functionally, component of the signal recognition particle (SRP) complex, a ribonucleoprotein complex that mediates the cotranslational targeting of secretory and membrane proteins to the endoplasmic reticulum (ER). The SRP complex interacts with the signal sequence in nascent secretory and membrane proteins and directs them to the membrane of the ER. The SRP complex targets the ribosome-nascent chain complex to the SRP receptor (SR), which is anchored in the ER, where SR compaction and GTPase rearrangement drive cotranslational protein translocation into the ER. Binds the signal recognition particle RNA (7SL RNA), srpa-72 binds to this complex subsequently. The SRP complex possibly participates in the elongation arrest function. The polypeptide is Signal recognition particle subunit SRP68 (Caenorhabditis elegans).